The following is a 302-amino-acid chain: Dihydroorotate dehydrogenase B (NAD(+)), catalytic subunit (302 aa).

FMN is bound by residues S20 and K44–G45. Substrate-binding positions include K44 and N68–L72. Positions 98 and 125 each coordinate FMN. N125 is a substrate binding site. C128 serves as the catalytic Nucleophile. Residues K163 and I189 each contribute to the FMN site. N190–T191 is a binding site for substrate. FMN contacts are provided by residues G215, G241–G242, and G263–T264.

This sequence belongs to the dihydroorotate dehydrogenase family. Type 1 subfamily. As to quaternary structure, heterotetramer of 2 PyrK and 2 PyrD type B subunits. FMN serves as cofactor.

The protein localises to the cytoplasm. The enzyme catalyses (S)-dihydroorotate + NAD(+) = orotate + NADH + H(+). Its pathway is pyrimidine metabolism; UMP biosynthesis via de novo pathway; orotate from (S)-dihydroorotate (NAD(+) route): step 1/1. Its function is as follows. Catalyzes the conversion of dihydroorotate to orotate with NAD(+) as electron acceptor. This chain is Dihydroorotate dehydrogenase B (NAD(+)), catalytic subunit (pyrD), found in Thermoanaerobacter sp. (strain X514).